A 276-amino-acid chain; its full sequence is uncharacterized protein (276 aa).

Y47 functions as the Proton donor in the catalytic mechanism. Residue H110 coordinates substrate.

The protein belongs to the aldo/keto reductase family.

Its subcellular location is the cytoplasm. The protein resides in the nucleus. This is an uncharacterized protein from Schizosaccharomyces pombe (strain 972 / ATCC 24843) (Fission yeast).